The primary structure comprises 446 residues: Exodeoxyribonuclease 7 large subunit (446 aa).

This sequence belongs to the XseA family. As to quaternary structure, heterooligomer composed of large and small subunits.

The protein localises to the cytoplasm. It carries out the reaction Exonucleolytic cleavage in either 5'- to 3'- or 3'- to 5'-direction to yield nucleoside 5'-phosphates.. In terms of biological role, bidirectionally degrades single-stranded DNA into large acid-insoluble oligonucleotides, which are then degraded further into small acid-soluble oligonucleotides. In Streptococcus gordonii (strain Challis / ATCC 35105 / BCRC 15272 / CH1 / DL1 / V288), this protein is Exodeoxyribonuclease 7 large subunit.